Reading from the N-terminus, the 87-residue chain is U1-theraphotoxin-Ct1a (87 aa).

An N-terminal signal peptide occupies residues 1–23 (MKTFTLIAILTCAVLVIFHAAAA). Positions 24-48 (EELEVQDVIQPEDTLTGLATLDEDR) are excised as a propeptide.

The protein belongs to the neurotoxin 12 (Hwtx-2) family. 03 (juruin) subfamily. Contains 3 disulfide bonds. Two different connectivities are observed in similar proteins (C1-C3, C2-C5, C4-C6 or C1-C4, C2-C5, C3-C6). Expressed by the venom gland.

Its subcellular location is the secreted. In terms of biological role, this toxin causes paralysis and death to sheep blowflies. It may inhibit voltage-gated calcium channels. This chain is U1-theraphotoxin-Ct1a, found in Coremiocnemis tropix (Australian tarantula spider).